The following is a 463-amino-acid chain: uncharacterized protein (463 aa).

11 helical membrane passes run 6–26 (ILPV…FMLL), 31–51 (TFIS…SLSA), 60–80 (FIYA…IVSM), 101–123 (VRGP…LFFW), 130–152 (LIGA…AAMA), 189–209 (ASIP…FIMI), 242–262 (SILA…MLLF), 269–289 (ATAL…FFVY), 304–324 (GFKF…FFYL), 413–433 (AIWV…AAIC), and 443–463 (KNFI…VMML).

It localises to the cell membrane. This is an uncharacterized protein from Bacillus subtilis (strain 168).